A 1045-amino-acid polypeptide reads, in one-letter code: Pre-mRNA-splicing factor ATP-dependent RNA helicase DHX16 (1045 aa).

The disordered stretch occupies residues 101–211; the sequence is EDSEESSEEA…ERSDKKAYEE (111 aa). A phosphoserine mark is found at Ser103, Ser106, and Ser107. Over residues 119–131 the composition is skewed to basic residues; it reads QKKRKKRKHLRKK. The segment covering 135 to 144 has biased composition (acidic residues); that stretch reads EEEEEEEEEV. At Ser164 the chain carries Phosphoserine. Over residues 170–211 the composition is skewed to basic and acidic residues; the sequence is RTERERLQDLEERDAFAERVRQRDKDRTRNVLERSDKKAYEE. The region spanning 413–577 is the Helicase ATP-binding domain; sequence LAAVANHQIL…FDDAPVFRIP (165 aa). 426 to 433 is an ATP binding site; that stretch reads GETGSGKT. Residues 524–527 carry the DEAH box motif; the sequence is DEAH. The 174-residue stretch at 602-775 folds into the Helicase C-terminal domain; that stretch reads SVLQIHVTQP…NVVLLLKSLG (174 aa). A Phosphothreonine modification is found at Thr716. Positions 1026–1045 are disordered; sequence EDPHAKKMPKKTGKTREELG.

It belongs to the DEAD box helicase family. DEAH subfamily. DDX16/PRP8 sub-subfamily. Component of pre-catalytic spliceosome complexes. Component of the minor spliceosome, which splices U12-type introns. Interacts with GPKOW. Interacts with TRIM6. Interacts with RIGI.

It is found in the nucleus. The protein localises to the nucleoplasm. It localises to the cytoplasm. The enzyme catalyses ATP + H2O = ADP + phosphate + H(+). Functionally, required for pre-mRNA splicing as a component of the spliceosome. Contributes to pre-mRNA splicing after spliceosome formation and prior to the first transesterification reaction. As a component of the minor spliceosome, involved in the splicing of U12-type introns in pre-mRNAs. Also plays a role in innate antiviral response by acting as a pattern recognition receptor sensing splicing signals in viral RNA. Mechanistically, TRIM6 promotes the interaction between unanchored 'Lys-48'-polyubiquitin chains and DHX16, leading to DHX16 interaction with RIGI and ssRNA to amplify RIGI-dependent innate antiviral immune responses. This Sus scrofa (Pig) protein is Pre-mRNA-splicing factor ATP-dependent RNA helicase DHX16 (DHX16).